The following is a 305-amino-acid chain: Transmembrane epididymal protein 1A (305 aa).

Residues 4–24 traverse the membrane as a helical segment; it reads FIGHISPGLFLVFYGLYQAVI. Asn-32 is a glycosylation site (N-linked (GlcNAc...) asparagine). Helical transmembrane passes span 54–74, 124–144, 159–179, 187–207, and 223–243; these read IAHAGWLKVVIGSLLIVYEIS, CVLLERGATVLGVYVLLLLLV, SLLILVVFLLMLVLTAELWAP, IETFLILIMGSWLIQAAFILF, and IMFVTTFFCWHVMINALCMLG. The tract at residues 285-305 is disordered; that stretch reads EQQDKDDQAPLLSKISPCDRA.

The protein belongs to the TMEM45 family.

It is found in the membrane. In Mus musculus (Mouse), this protein is Transmembrane epididymal protein 1A.